We begin with the raw amino-acid sequence, 80 residues long: Small ribosomal subunit protein bS16 (80 aa).

This sequence belongs to the bacterial ribosomal protein bS16 family.

The polypeptide is Small ribosomal subunit protein bS16 (Laribacter hongkongensis (strain HLHK9)).